The following is a 464-amino-acid chain: Forkhead box protein N3 (464 aa).

Disordered regions lie at residues 1–53 (MGPI…EKGG) and 85–108 (PVQDIDDDTPPSPAQSDMPYDAKQ). Residues 14-30 (TGISVSSQCYRSSTLSN) are compositionally biased toward polar residues. The segment at residues 113 to 209 (KPPYSFSCLI…QALKKTPYHP (97 aa)) is a DNA-binding region (fork-head). 2 disordered regions span residues 294-337 (MESE…SSSA) and 381-428 (LVES…MKEA). Positions 316–336 (SSAKSANKRSSSPSDSISSSS) are enriched in low complexity. Positions 389–401 (QHKKKQHLLKLRR) are enriched in basic residues.

It is found in the nucleus. Its function is as follows. Acts as a transcriptional repressor. May be involved in DNA damage-inducible cell cycle arrests (checkpoints). This Xenopus tropicalis (Western clawed frog) protein is Forkhead box protein N3.